A 442-amino-acid polypeptide reads, in one-letter code: MKKVFIRTFGCQMNEYDSEKMLSVLAEEHGGIEQVTQADEADIILFNTCSVREKAQEKVFSDLGRVRPLKEKNPGLIIGVAGCVASQEGENIIKRAPYVDVVFGPQTLHRLPKMIVDKETSGLSQVDISFPEIEKFDHLPPARVEGGAAFVSIMEGCSKYCSFCVVPYTRGEEFSRPLNDVLTEIANLAQQGVKEINLLGQNVNAYRGEMDDGEICDFATLLRIVHEIPGIERMRFTTSHPREFTDSIIECYRDLPKLVSHLHLPIQSGSDRVLSAMKRGYTALEYKSIIRKLRAIRPDLCLSSDFIVGFPGETEREFEQTLKLVKDIAFDLSFVFIYSPRPGTPAANLPDDTPHEEKVRRLEALNEVIEAETARINQTMIGTVQRCLVEGISKKDPDQLQARTVNNRVVNFTGTPDMINQMIDLEITEAYTFSLRGKIVEA.

In terms of domain architecture, MTTase N-terminal spans 2–120; it reads KKVFIRTFGC…LPKMIVDKET (119 aa). [4Fe-4S] cluster contacts are provided by C11, C49, C83, C157, C161, and C164. One can recognise a Radical SAM core domain in the interval 143–375; sequence RVEGGAAFVS…NEVIEAETAR (233 aa). A TRAM domain is found at 378-441; sequence QTMIGTVQRC…TFSLRGKIVE (64 aa).

It belongs to the methylthiotransferase family. MiaB subfamily. In terms of assembly, monomer. [4Fe-4S] cluster serves as cofactor.

The protein resides in the cytoplasm. It catalyses the reaction N(6)-dimethylallyladenosine(37) in tRNA + (sulfur carrier)-SH + AH2 + 2 S-adenosyl-L-methionine = 2-methylsulfanyl-N(6)-dimethylallyladenosine(37) in tRNA + (sulfur carrier)-H + 5'-deoxyadenosine + L-methionine + A + S-adenosyl-L-homocysteine + 2 H(+). Catalyzes the methylthiolation of N6-(dimethylallyl)adenosine (i(6)A), leading to the formation of 2-methylthio-N6-(dimethylallyl)adenosine (ms(2)i(6)A) at position 37 in tRNAs that read codons beginning with uridine. This Neisseria gonorrhoeae (strain ATCC 700825 / FA 1090) protein is tRNA-2-methylthio-N(6)-dimethylallyladenosine synthase.